We begin with the raw amino-acid sequence, 805 residues long: Cell division cycle protein 48 homolog (805 aa).

Residues 249–256 (GPPGSGKT) and 522–529 (GPPGCGKT) contribute to the ATP site. The disordered stretch occupies residues 783–805 (GATAAADPFATSNAAADDDDLYS).

The protein belongs to the AAA ATPase family.

Functionally, probably functions in cell division and growth processes. This chain is Cell division cycle protein 48 homolog (CAFP), found in Capsicum annuum (Capsicum pepper).